The primary structure comprises 739 residues: Sulfate transporter (739 aa).

2 stretches are compositionally biased toward basic and acidic residues: residues 1 to 17 (MSSENKEQHDLSPRDLP) and 31 to 46 (TQRRSGTDLRQSETGH). A disordered region spans residues 1 to 47 (MSSENKEQHDLSPRDLPEEAFGFPSELPLETQRRSGTDLRQSETGHG). At serine 12 the chain carries Phosphoserine. 2 helical membrane passes run 112–132 (VMSGLIVGILLVPQSIAYSLL) and 137–157 (PIYGLYTSFFASIIYFLFGTS). A glycan (N-linked (GlcNAc...) asparagine) is linked at asparagine 205. Helical transmembrane passes span 227-247 (FMAGVYQVAMGFFQVGFVSVY) and 255-275 (GFVTGASFTILTSQAKYLLGL). Asparagine 357 carries an N-linked (GlcNAc...) asparagine glycan. 4 helical membrane-spanning segments follow: residues 378–398 (LIPNVAVDAIAISIIGFAITV), 420–440 (AIGFCNIIPSFFHCITTSAAL), 455–475 (LSAIVTALVLLLVLLVIAPLF), and 524–544 (LLSTEIGLLVGVCFSMFCVIL). The STAS domain maps to 568-719 (TYKNLRSKSG…YSLSEAVAFA (152 aa)).

It belongs to the SLC26A/SulP transporter (TC 2.A.53) family. N-glycosylated. Distributed mainly in the thymus, testis and osteoblastic cells. Highly expressed in the bone, cartilage, kidney and colon.

The protein resides in the cell membrane. It is found in the apical cell membrane. The enzyme catalyses oxalate(in) + sulfate(out) = oxalate(out) + sulfate(in). The catalysed reaction is sulfate(out) + 2 chloride(in) = sulfate(in) + 2 chloride(out). It catalyses the reaction oxalate(out) + 2 chloride(in) = oxalate(in) + 2 chloride(out). It carries out the reaction bromide(in) + chloride(out) = bromide(out) + chloride(in). The enzyme catalyses nitrate(in) + chloride(out) = nitrate(out) + chloride(in). The catalysed reaction is iodide(in) + chloride(out) = iodide(out) + chloride(in). Functionally, sulfate transporter which mediates sulfate uptake into chondrocytes in order to maintain adequate sulfation of proteoglycans which is needed for cartilage development. Mediates electroneutral anion exchange of sulfate ions for oxalate ions, sulfate and oxalate ions for chloride and/or hydroxyl ions and chloride ions for bromide, iodide and nitrate ions. The coupling of sulfate transport to both hydroxyl and chloride ions likely serves to ensure transport at both acidic pH when most sulfate uptake is mediated by sulfate-hydroxide exchange and alkaline pH when most sulfate uptake is mediated by sulfate-chloride exchange. Essential for chondrocyte proliferation, differentiation and cell size expansion. The polypeptide is Sulfate transporter (Slc26a2) (Mus musculus (Mouse)).